The sequence spans 402 residues: mRNA-capping enzyme subunit alpha (402 aa).

The active-site N6-GMP-lysine intermediate is the lysine 66.

It belongs to the eukaryotic GTase family. In terms of assembly, heterodimer. The mRNA-capping enzyme is composed of two separate chains alpha and beta, respectively a mRNA guanylyltransferase and an mRNA 5'-triphosphate monophosphatase.

The protein localises to the nucleus. It catalyses the reaction a 5'-end diphospho-ribonucleoside in mRNA + GTP + H(+) = a 5'-end (5'-triphosphoguanosine)-ribonucleoside in mRNA + diphosphate. Functionally, second step of mRNA capping. Transfer of the GMP moiety of GTP to the 5'-end of RNA via an enzyme-GMP covalent reaction intermediate. This is mRNA-capping enzyme subunit alpha (rnp-2) from Neurospora crassa (strain ATCC 24698 / 74-OR23-1A / CBS 708.71 / DSM 1257 / FGSC 987).